The sequence spans 382 residues: Mannitol-1-phosphate 5-dehydrogenase (382 aa).

Alanine 3–glycine 14 serves as a coordination point for NAD(+).

It belongs to the mannitol dehydrogenase family.

The catalysed reaction is D-mannitol 1-phosphate + NAD(+) = beta-D-fructose 6-phosphate + NADH + H(+). This chain is Mannitol-1-phosphate 5-dehydrogenase, found in Paenarthrobacter aurescens (strain TC1).